Consider the following 508-residue polypeptide: ATP synthase subunit alpha, chloroplastic (508 aa).

172–179 serves as a coordination point for ATP; sequence GDRQTGKT.

This sequence belongs to the ATPase alpha/beta chains family. F-type ATPases have 2 components, CF(1) - the catalytic core - and CF(0) - the membrane proton channel. CF(1) has five subunits: alpha(3), beta(3), gamma(1), delta(1), epsilon(1). CF(0) has four main subunits: a, b, b' and c.

It is found in the plastid. Its subcellular location is the chloroplast thylakoid membrane. The enzyme catalyses ATP + H2O + 4 H(+)(in) = ADP + phosphate + 5 H(+)(out). Its function is as follows. Produces ATP from ADP in the presence of a proton gradient across the membrane. The alpha chain is a regulatory subunit. This chain is ATP synthase subunit alpha, chloroplastic, found in Angiopteris evecta (Mule's foot fern).